Consider the following 188-residue polypeptide: Early nodulin-like protein 5 (188 aa).

The first 24 residues, 1–24 (MDSSKKIIIVMFLVTFYMFSCVSS), serve as a signal peptide directing secretion. The 104-residue stretch at 25-128 (TEFEVGGENG…GQKMIVKVME (104 aa)) folds into the Phytocyanin domain. Residues cysteine 82 and cysteine 116 are joined by a disulfide bond. Residues 127–157 (METESSTESPPPSSSSSSSSSSSLPASTPKA) form a disordered region. A compositionally biased stretch (low complexity) spans 129-155 (TESSTESPPPSSSSSSSSSSSLPASTP). Residue serine 170 is the site of GPI-anchor amidated serine attachment. The propeptide at 171–188 (SSGFVVSAVLIVSVFGLV) is removed in mature form.

The protein belongs to the early nodulin-like (ENODL) family. As to expression, mostly expressed in leaves and flowers, and, to a lower extent, in stems.

It is found in the cell membrane. Functionally, may act as a carbohydrate transporter. Mainly required for reproductive functions. This is Early nodulin-like protein 5 from Arabidopsis thaliana (Mouse-ear cress).